Here is a 252-residue protein sequence, read N- to C-terminus: Pyridoxine 5'-phosphate synthase (252 aa).

Residue Asn-7 coordinates 3-amino-2-oxopropyl phosphate. Position 9-10 (Asp-9–His-10) interacts with 1-deoxy-D-xylulose 5-phosphate. Arg-18 serves as a coordination point for 3-amino-2-oxopropyl phosphate. His-43 serves as the catalytic Proton acceptor. Positions 45 and 50 each coordinate 1-deoxy-D-xylulose 5-phosphate. Catalysis depends on Glu-70, which acts as the Proton acceptor. Thr-100 is a 1-deoxy-D-xylulose 5-phosphate binding site. His-190 serves as the catalytic Proton donor. 3-amino-2-oxopropyl phosphate is bound by residues Gly-191 and Gly-212–His-213.

Belongs to the PNP synthase family. Homooctamer; tetramer of dimers.

It localises to the cytoplasm. It carries out the reaction 3-amino-2-oxopropyl phosphate + 1-deoxy-D-xylulose 5-phosphate = pyridoxine 5'-phosphate + phosphate + 2 H2O + H(+). It participates in cofactor biosynthesis; pyridoxine 5'-phosphate biosynthesis; pyridoxine 5'-phosphate from D-erythrose 4-phosphate: step 5/5. Functionally, catalyzes the complicated ring closure reaction between the two acyclic compounds 1-deoxy-D-xylulose-5-phosphate (DXP) and 3-amino-2-oxopropyl phosphate (1-amino-acetone-3-phosphate or AAP) to form pyridoxine 5'-phosphate (PNP) and inorganic phosphate. The polypeptide is Pyridoxine 5'-phosphate synthase (Synechococcus sp. (strain RCC307)).